Here is a 305-residue protein sequence, read N- to C-terminus: Nitrogen assimilation regulatory protein nac (305 aa).

Residues 1-58 form the HTH lysR-type domain; it reads MNLRRLKYFVKIVDIGSLTQAAEVLHIAQPALSQQVATLEGEMDQQLLIRTKRGVTPT. Positions 18 to 37 form a DNA-binding region, H-T-H motif; the sequence is LTQAAEVLHIAQPALSQQVA.

This sequence belongs to the LysR transcriptional regulatory family.

Functionally, transcriptional activator for the hut, put and ure operons and repressor for the gdh and gltB operons in response to nitrogen limitation. Negative regulator of its own expression. The chain is Nitrogen assimilation regulatory protein nac (nac) from Klebsiella aerogenes (Enterobacter aerogenes).